A 174-amino-acid polypeptide reads, in one-letter code: RNA pyrophosphohydrolase (174 aa).

In terms of domain architecture, Nudix hydrolase spans 6-149 (GFRANVGIII…KRDVYRKVMK (144 aa)). The short motif at 38-59 (GGVDDGESAEEAMYRELYEEVG) is the Nudix box element.

This sequence belongs to the Nudix hydrolase family. RppH subfamily. It depends on a divalent metal cation as a cofactor.

Functionally, accelerates the degradation of transcripts by removing pyrophosphate from the 5'-end of triphosphorylated RNA, leading to a more labile monophosphorylated state that can stimulate subsequent ribonuclease cleavage. This chain is RNA pyrophosphohydrolase, found in Shewanella sp. (strain ANA-3).